A 208-amino-acid polypeptide reads, in one-letter code: Large ribosomal subunit protein uL4 (208 aa).

Positions 45-83 (RQGTHKSKTRAEVRGGGRKPYRQKGTGNARQGSTRSPLM) are disordered. Over residues 69–80 (GTGNARQGSTRS) the composition is skewed to polar residues.

It belongs to the universal ribosomal protein uL4 family. Part of the 50S ribosomal subunit.

In terms of biological role, one of the primary rRNA binding proteins, this protein initially binds near the 5'-end of the 23S rRNA. It is important during the early stages of 50S assembly. It makes multiple contacts with different domains of the 23S rRNA in the assembled 50S subunit and ribosome. Functionally, forms part of the polypeptide exit tunnel. This chain is Large ribosomal subunit protein uL4, found in Chlorobium luteolum (strain DSM 273 / BCRC 81028 / 2530) (Pelodictyon luteolum).